A 156-amino-acid polypeptide reads, in one-letter code: Arginine repressor (156 aa).

It belongs to the ArgR family.

It localises to the cytoplasm. It functions in the pathway amino-acid biosynthesis; L-arginine biosynthesis [regulation]. Functionally, regulates arginine biosynthesis genes. In Yersinia enterocolitica serotype O:8 / biotype 1B (strain NCTC 13174 / 8081), this protein is Arginine repressor.